The following is a 256-amino-acid chain: Geranylgeranylglyceryl phosphate synthase (256 aa).

2 residues coordinate Mg(2+): aspartate 28 and serine 53. Residues 172–178 (YLEAGSG), 203–204 (GG), and 225–226 (GT) each bind sn-glycerol 1-phosphate.

The protein belongs to the GGGP/HepGP synthase family. Group II subfamily. Mg(2+) is required as a cofactor.

It is found in the cytoplasm. It carries out the reaction sn-glycerol 1-phosphate + (2E,6E,10E)-geranylgeranyl diphosphate = sn-3-O-(geranylgeranyl)glycerol 1-phosphate + diphosphate. The protein operates within membrane lipid metabolism; glycerophospholipid metabolism. Its function is as follows. Prenyltransferase that catalyzes the transfer of the geranylgeranyl moiety of geranylgeranyl diphosphate (GGPP) to the C3 hydroxyl of sn-glycerol-1-phosphate (G1P). This reaction is the first ether-bond-formation step in the biosynthesis of archaeal membrane lipids. The chain is Geranylgeranylglyceryl phosphate synthase from Methanococcus maripaludis (strain C5 / ATCC BAA-1333).